The primary structure comprises 224 residues: Phosphoglycolate phosphatase (224 aa).

Asp-8 acts as the Nucleophile in catalysis. Asp-8, Asp-10, Gly-11, and Gly-43 together coordinate Mg(2+). Lys-151 contacts substrate. Residues Asp-174, Ser-175, and Asp-178 each coordinate Mg(2+).

It belongs to the HAD-like hydrolase superfamily. Archaeal SPP-like hydrolase family. Homodimer. Mg(2+) is required as a cofactor.

The catalysed reaction is 2-phosphoglycolate + H2O = glycolate + phosphate. Its activity is regulated as follows. Inhibited by Ca(2+) ions and by high chloride ion concentration. By contrast, low chloride concentration (up to 50 mM) slightly activate the enzyme. Catalyzes the dephosphorylation of 2-phosphoglycolate. Also has significant, but less efficient, pyrophosphatase activity, since it is able to catalyze the release of phosphate from inorganic pyrophosphate (PPi). The sequence is that of Phosphoglycolate phosphatase from Thermoplasma acidophilum (strain ATCC 25905 / DSM 1728 / JCM 9062 / NBRC 15155 / AMRC-C165).